We begin with the raw amino-acid sequence, 405 residues long: Acetate kinase (405 aa).

Asn-7 is a binding site for Mg(2+). Residue Lys-14 participates in ATP binding. Arg-98 provides a ligand contact to substrate. Asp-155 functions as the Proton donor/acceptor in the catalytic mechanism. Residues 214-218 (HLGNG), 289-291 (DLR), and 337-341 (GVGEN) each bind ATP. Glu-390 lines the Mg(2+) pocket.

Belongs to the acetokinase family. In terms of assembly, homodimer. It depends on Mg(2+) as a cofactor. Requires Mn(2+) as cofactor.

It localises to the cytoplasm. The catalysed reaction is acetate + ATP = acetyl phosphate + ADP. Its pathway is metabolic intermediate biosynthesis; acetyl-CoA biosynthesis; acetyl-CoA from acetate: step 1/2. Its function is as follows. Catalyzes the formation of acetyl phosphate from acetate and ATP. Can also catalyze the reverse reaction. This is Acetate kinase from Gloeothece citriformis (strain PCC 7424) (Cyanothece sp. (strain PCC 7424)).